The sequence spans 353 residues: Protein-arginine kinase (353 aa).

In terms of domain architecture, Phosphagen kinase C-terminal spans 24–256 (IVLSSRIRLA…RTVIDTEEQA (233 aa)). Residues 27 to 31 (SSRIR), His-93, Arg-127, 178 to 182 (RASVM), and 209 to 214 (RGLYGE) contribute to the ATP site. The RDXXRA motif of the pArg binding pocket involved in allosteric regulation motif lies at 339-344 (RDVRRA).

Belongs to the ATP:guanido phosphotransferase family.

The enzyme catalyses L-arginyl-[protein] + ATP = N(omega)-phospho-L-arginyl-[protein] + ADP + H(+). Its activity is regulated as follows. Appears to be allosterically activated by the binding of pArg-containing polypeptides to the pArg-binding pocket localized in the C-terminal domain of McsB. In terms of biological role, catalyzes the specific phosphorylation of arginine residues in proteins. This chain is Protein-arginine kinase, found in Symbiobacterium thermophilum (strain DSM 24528 / JCM 14929 / IAM 14863 / T).